A 141-amino-acid polypeptide reads, in one-letter code: Hemoglobin subunit alpha-A (141 aa).

The Globin domain maps to 1 to 141; that stretch reads VLSAADKNNV…VGNVLTAKYR (141 aa). Residue histidine 58 participates in O2 binding. Heme b is bound at residue histidine 87.

It belongs to the globin family. Heterotetramer of two alpha chains and two beta chains. Red blood cells.

Its function is as follows. Involved in oxygen transport from the lung to the various peripheral tissues. In Francolinus pondicerianus (Grey francolin), this protein is Hemoglobin subunit alpha-A (HBAA).